A 339-amino-acid polypeptide reads, in one-letter code: MADLKPYIAKAASGEPLPLGDAKAAFDIMMSGQATPSQIGGFLMALRVRGETVPEIAGAVASMRSRMIPVIAPDDAMDIVGTGGDQSGSYNVSSCTAFVVAGAGVPVAKHGNRALSSRSGAADALAALGINIEADADTIGRSISEAGLGFMFAPMHHSAMRHVGPSRVELGTRTIFNLLGPLSNPASVKRQLVGIFAPQWLEPLAHVLKELGSETAWVVYGDGLDEMTTAGTTQVAALENGQIRTFEITPEEVGLRRCSPAELKGGEAAENAKALLGVLEGKDSAYRDIVLLNSGAALVVAGKAENLKDGIAQAVQSIDSGAALAVLQKVIAVSNDKPA.

5-phospho-alpha-D-ribose 1-diphosphate-binding positions include Gly-81, 84-85 (GD), Ser-89, 91-94 (NVSS), 109-117 (KHGNRALSS), and Ala-121. Gly-81 is a binding site for anthranilate. Ser-93 contacts Mg(2+). Position 112 (Asn-112) interacts with anthranilate. Anthranilate is bound at residue Arg-167. Positions 225 and 226 each coordinate Mg(2+).

It belongs to the anthranilate phosphoribosyltransferase family. Homodimer. Mg(2+) is required as a cofactor.

It catalyses the reaction N-(5-phospho-beta-D-ribosyl)anthranilate + diphosphate = 5-phospho-alpha-D-ribose 1-diphosphate + anthranilate. The protein operates within amino-acid biosynthesis; L-tryptophan biosynthesis; L-tryptophan from chorismate: step 2/5. Catalyzes the transfer of the phosphoribosyl group of 5-phosphorylribose-1-pyrophosphate (PRPP) to anthranilate to yield N-(5'-phosphoribosyl)-anthranilate (PRA). The polypeptide is Anthranilate phosphoribosyltransferase (Brucella ovis (strain ATCC 25840 / 63/290 / NCTC 10512)).